The sequence spans 87 residues: Small ribosomal subunit protein uS17 (87 aa).

This sequence belongs to the universal ribosomal protein uS17 family. Part of the 30S ribosomal subunit.

Functionally, one of the primary rRNA binding proteins, it binds specifically to the 5'-end of 16S ribosomal RNA. This is Small ribosomal subunit protein uS17 from Geobacillus sp. (strain WCH70).